The chain runs to 200 residues: NAD(P)H-quinone oxidoreductase subunit 6, chloroplastic (200 aa).

5 consecutive transmembrane segments (helical) span residues 13 to 33 (VFFV…VFLT), 35 to 55 (IVYS…LYLL), 64 to 84 (AQIL…VMLI), 101 to 121 (TITL…ILSI), and 156 to 176 (LLPF…AITI).

It belongs to the complex I subunit 6 family. As to quaternary structure, NDH is composed of at least 16 different subunits, 5 of which are encoded in the nucleus.

It is found in the plastid. The protein resides in the chloroplast thylakoid membrane. The catalysed reaction is a plastoquinone + NADH + (n+1) H(+)(in) = a plastoquinol + NAD(+) + n H(+)(out). The enzyme catalyses a plastoquinone + NADPH + (n+1) H(+)(in) = a plastoquinol + NADP(+) + n H(+)(out). NDH shuttles electrons from NAD(P)H:plastoquinone, via FMN and iron-sulfur (Fe-S) centers, to quinones in the photosynthetic chain and possibly in a chloroplast respiratory chain. The immediate electron acceptor for the enzyme in this species is believed to be plastoquinone. Couples the redox reaction to proton translocation, and thus conserves the redox energy in a proton gradient. The sequence is that of NAD(P)H-quinone oxidoreductase subunit 6, chloroplastic (ndhG) from Anthoceros angustus (Hornwort).